Here is a 151-residue protein sequence, read N- to C-terminus: MAVTIDPKTFYANPPPGKPFYVRFEVPADVAEKALEVLSVAKQTGKIKKGTNEATKAVERGLAKLVLIAEDVDPPEVVAHLPLLCEEKKVPYVYVPSKEKLGKAAGINVSAAAAVVIEPGQAAGELEALVSKVNEIRAKNGLNAIPLPGRK.

Belongs to the eukaryotic ribosomal protein eL8 family. In terms of assembly, part of the 50S ribosomal subunit. Probably part of the RNase P complex.

Its subcellular location is the cytoplasm. In terms of biological role, multifunctional RNA-binding protein that recognizes the K-turn motif in ribosomal RNA, the RNA component of RNase P, box H/ACA, box C/D and box C'/D' sRNAs. This Pyrobaculum neutrophilum (strain DSM 2338 / JCM 9278 / NBRC 100436 / V24Sta) (Thermoproteus neutrophilus) protein is Large ribosomal subunit protein eL8.